We begin with the raw amino-acid sequence, 122 residues long: Structural protein p14.5 (122 aa).

Disordered regions lie at residues 1 to 27 (MADF…LEYD) and 85 to 122 (TSLV…HKSK). Position 2 is an N-acetylalanine; by host (Ala-2). Positions 105–122 (KPKKKKHLFPKLSSHKSK) are enriched in basic residues.

It belongs to the asfivirus structural protein p14.5 family. Interacts with the major capsid protein. Interacts with host IRF3; this interaction interferes with the recruitment of IRF3 to TBK1. Acetylated.

Its subcellular location is the virion. Structural protein required for transport of intracellular particles from the assembly sites to the plasma membrane. Binds to both ssDNA and dsDNA. Suppressed the activation of the cGAS/STING pathway by interfering with the recruitment of IRF3 to TBK1, which in turn suppresses IRF3 phosphorylation, decreasing interferon production. In African swine fever virus (isolate Tick/Malawi/Lil 20-1/1983) (ASFV), this protein is Structural protein p14.5.